The following is an 834-amino-acid chain: Mannosyl-oligosaccharide glucosidase (834 aa).

Positions 1 to 10 (MARGERRRRA) are enriched in basic residues. Topologically, residues 1–36 (MARGERRRRAAAAEGARPLERARGAGRRDGRAGGAR) are cytoplasmic. Positions 1-37 (MARGERRRRAAAAEGARPLERARGAGRRDGRAGGARG) are disordered. The Endoplasmic reticulum targeting signature appears at 3–9 (RGERRRR). A compositionally biased stretch (basic and acidic residues) spans 17–31 (RPLERARGAGRRDGR). Residues 37-57 (GSAGGAALAVVVLALAFGLSG) traverse the membrane as a helical; Signal-anchor for type II membrane protein segment. Over 58–834 (RWVLAWLGVR…LVLLIMAEEY (777 aa)) the chain is Lumenal. The required for endoplasmic reticulum targeting stretch occupies residues 74–136 (PAPSALPPDS…GTPPKLRHTC (63 aa)). Residue Asp580 is the Proton donor of the active site. Asn654 is a glycosylation site (N-linked (GlcNAc...) asparagine). Glu804 functions as the Proton acceptor in the catalytic mechanism.

Belongs to the glycosyl hydrolase 63 family.

The protein resides in the endoplasmic reticulum membrane. The enzyme catalyses N(4)-(alpha-D-Glc-(1-&gt;2)-alpha-D-Glc-(1-&gt;3)-alpha-D-Glc-(1-&gt;3)-alpha-D-Man-(1-&gt;2)-alpha-D-Man-(1-&gt;2)-alpha-D-Man-(1-&gt;3)-[alpha-D-Man-(1-&gt;2)-alpha-D-Man-(1-&gt;3)-[alpha-D-Man-(1-&gt;2)-alpha-D-Man-(1-&gt;6)]-alpha-D-Man-(1-&gt;6)]-beta-D-Man-(1-&gt;4)-beta-D-GlcNAc-(1-&gt;4)-beta-D-GlcNAc)-L-asparaginyl-[protein] + H2O = N(4)-(alpha-D-Glc-(1-&gt;3)-alpha-D-Glc-(1-&gt;3)-alpha-D-Man-(1-&gt;2)-alpha-D-Man-(1-&gt;2)-alpha-D-Man-(1-&gt;3)-[alpha-D-Man-(1-&gt;2)-alpha-D-Man-(1-&gt;3)-[alpha-D-Man-(1-&gt;2)-alpha-D-Man-(1-&gt;6)]-alpha-D-Man-(1-&gt;6)]-beta-D-Man-(1-&gt;4)-beta-D-GlcNAc-(1-&gt;4)-beta-D-GlcNAc)-L-asparaginyl-[protein] + beta-D-glucose. It functions in the pathway glycan metabolism; N-glycan degradation. Its function is as follows. In the context of N-glycan degradation, cleaves the distal alpha 1,2-linked glucose residue from the Glc(3)Man(9)GlcNAc(2) oligosaccharide precursor in a highly specific manner. This chain is Mannosyl-oligosaccharide glucosidase, found in Rattus norvegicus (Rat).